A 168-amino-acid chain; its full sequence is Transmembrane protein 229b (168 aa).

Over 1–14 the chain is Cytoplasmic; that stretch reads MAPPEPLTALSRWY. Residues 15–35 form a helical membrane-spanning segment; sequence LYAIHGYFCEVMFTAAWDFVV. The Extracellular portion of the chain corresponds to 36–40; the sequence is NYNWK. Residues 41–61 form a helical membrane-spanning segment; it reads FPGVTSVWALFIYGTSILIVE. Topologically, residues 62–72 are cytoplasmic; it reads KMYLYLKDKCN. Residues 73–93 form a helical membrane-spanning segment; that stretch reads ILIRCLIYTLWTYIWEFSTGL. The Extracellular portion of the chain corresponds to 94-109; the sequence is ILRQFNACPWDYSQFD. A helical membrane pass occupies residues 110 to 130; sequence FDFMGLITLEYAIPWFCASFI. Residues 131–168 are Cytoplasmic-facing; sequence MEQLVIRNTLRLRFDEHAEPGSPVMSTVSMANGHVKCN.

The protein belongs to the TMEM229 family.

It is found in the membrane. The protein is Transmembrane protein 229b (tmem229b) of Xenopus tropicalis (Western clawed frog).